The primary structure comprises 682 residues: Potassium-transporting ATPase ATP-binding subunit (682 aa).

Transmembrane regions (helical) follow at residues 34–54 (PVMF…LAMV), 58–78 (IAGS…TVLF), 219–239 (IALT…TATL), and 254–274 (VLVA…LSAI). Aspartate 307 (4-aspartylphosphate intermediate) is an active-site residue. ATP-binding positions include aspartate 344, glutamate 348, 377-384 (FTAQSRMS), and lysine 395. Residues aspartate 518 and aspartate 522 each coordinate Mg(2+). 3 consecutive transmembrane segments (helical) span residues 588 to 608 (FAII…LNVM), 616 to 636 (AILS…PLAL), and 662 to 682 (LVVP…LGLA).

This sequence belongs to the cation transport ATPase (P-type) (TC 3.A.3) family. Type IA subfamily. The system is composed of three essential subunits: KdpA, KdpB and KdpC.

It localises to the cell inner membrane. It catalyses the reaction K(+)(out) + ATP + H2O = K(+)(in) + ADP + phosphate + H(+). Functionally, part of the high-affinity ATP-driven potassium transport (or Kdp) system, which catalyzes the hydrolysis of ATP coupled with the electrogenic transport of potassium into the cytoplasm. This subunit is responsible for energy coupling to the transport system and for the release of the potassium ions to the cytoplasm. In Salmonella choleraesuis (strain SC-B67), this protein is Potassium-transporting ATPase ATP-binding subunit.